The primary structure comprises 302 residues: Glutaminase (302 aa).

The substrate site is built by Ser61, Asn111, Glu155, Asn162, Tyr186, Tyr238, and Val256.

The protein belongs to the glutaminase family. As to quaternary structure, homotetramer.

It carries out the reaction L-glutamine + H2O = L-glutamate + NH4(+). The polypeptide is Glutaminase (Pseudomonas aeruginosa (strain ATCC 15692 / DSM 22644 / CIP 104116 / JCM 14847 / LMG 12228 / 1C / PRS 101 / PAO1)).